The primary structure comprises 55 residues: Preprotein translocase subunit SecG (55 aa).

Over 1–29 the chain is Cytoplasmic; the sequence is MAKKSGSGLQSSAGLMRYYEADKNAVQVQ. Residues 30 to 51 traverse the membrane as a helical segment; that stretch reads PKVVLIVGAIVGIAVLFLSAVN. Residues 52 to 55 are Extracellular-facing; sequence GFWP.

It belongs to the SEC61-beta family. Component of the protein translocase complex. Heterotrimer consisting of alpha (SecY), beta (SecG) and gamma (SecE) subunits. Can form oligomers of the heterotrimer.

The protein resides in the cell membrane. Involved in protein export. The function of the beta subunit is unknown, but it may be involved in stabilization of the trimeric complex. This chain is Preprotein translocase subunit SecG, found in Methanosarcina barkeri (strain Fusaro / DSM 804).